We begin with the raw amino-acid sequence, 586 residues long: Major facilitator superfamily domain-containing protein 6-like (586 aa).

2 consecutive transmembrane segments (helical) span residues Thr-50–Ala-70 and Ala-78–Pro-98. The segment at Ala-133–Ser-160 is disordered. 9 helical membrane-spanning segments follow: residues Phe-246–Val-266, Leu-287–Gly-307, Gly-326–Cys-346, Ile-361–Ile-381, Glu-400–Phe-420, Leu-433–Trp-455, Ser-456–Gly-476, Phe-499–Ser-519, and Ala-521–Ile-541.

It belongs to the major facilitator superfamily. MFSD6 family.

It is found in the membrane. This Homo sapiens (Human) protein is Major facilitator superfamily domain-containing protein 6-like (MFSD6L).